Here is a 533-residue protein sequence, read N- to C-terminus: Sterol 26-hydroxylase, mitochondrial (533 aa).

The N-terminal 32 residues, 1 to 32 (MAAWSRTRLRWTLLDPRVVGRGLCPQGARAKA), are a transit peptide targeting the mitochondrion. Positions 34–60 (IPAALQAQESTEGPGTGQDRPRLRSPA) are disordered. Residues K142, K232, K285, K296, and K375 each carry the N6-acetyllysine modification. The sterol-binding stretch occupies residues 386–400 (PLLKAVIKETLRLYP). Residue C479 participates in heme binding. An N6-acetyllysine mark is found at K512 and K523.

The protein belongs to the cytochrome P450 family. Interacts with HSP70; this interaction is required for initial targeting to mitochondria. Heme serves as cofactor. Acetylation of Lys-125 and Lys-285 is observed in liver mitochondria from fasted mice but not from fed mice. As to expression, expressed in the gray and white matter of cerebellum (at protein level).

Its subcellular location is the mitochondrion inner membrane. The catalysed reaction is 5beta-cholestane-3alpha,7alpha,12alpha-triol + 6 reduced [adrenodoxin] + 3 O2 + 5 H(+) = (25R)-3alpha,7alpha,12alpha-trihydroxy-5beta-cholestan-26-oate + 6 oxidized [adrenodoxin] + 4 H2O. It catalyses the reaction cholestanol + 2 reduced [adrenodoxin] + O2 + 2 H(+) = (25R)-26-hydroxycholestanol + 2 oxidized [adrenodoxin] + H2O. It carries out the reaction (25R)-3beta-hydroxycholest-5-en-7-one-26-al + 2 reduced [adrenodoxin] + O2 + H(+) = (25R)-3beta-hydroxycholest-5-en-7-one-26-oate + 2 oxidized [adrenodoxin] + H2O. The enzyme catalyses (25R)-3beta,26-dihydroxycholest-5-en-7-one + 2 reduced [adrenodoxin] + O2 + 2 H(+) = (25R)-3beta-hydroxycholest-5-en-7-one-26-al + 2 oxidized [adrenodoxin] + 2 H2O. The catalysed reaction is 7-oxocholesterol + 2 reduced [adrenodoxin] + O2 + 2 H(+) = (25R)-3beta,26-dihydroxycholest-5-en-7-one + 2 oxidized [adrenodoxin] + H2O. It catalyses the reaction calciol + 2 reduced [adrenodoxin] + O2 + 2 H(+) = calcidiol + 2 oxidized [adrenodoxin] + H2O. It carries out the reaction (25R)-5beta-cholestane-3alpha,7alpha,12alpha,26-tetrol + 2 reduced [adrenodoxin] + O2 + 2 H(+) = (25R)-3alpha,7alpha,12alpha-trihydroxy-5beta-cholestan-26-al + 2 oxidized [adrenodoxin] + 2 H2O. The enzyme catalyses 2 reduced [adrenodoxin] + cholesterol + O2 + 2 H(+) = (25R)-cholest-5-ene-3beta,26-diol + 2 oxidized [adrenodoxin] + H2O. The catalysed reaction is (25R)-3beta,4beta-dihydroxycholest-5-en-26-al + 2 reduced [adrenodoxin] + O2 + H(+) = (25R)-3beta,4beta-dihydroxycholest-5-en-26-oate + 2 oxidized [adrenodoxin] + H2O. It catalyses the reaction (25R)-4beta,26-dihydroxycholesterol + 2 reduced [adrenodoxin] + O2 + 2 H(+) = (25R)-3beta,4beta-dihydroxycholest-5-en-26-al + 2 oxidized [adrenodoxin] + 2 H2O. It carries out the reaction 4beta-hydroxycholesterol + 2 reduced [adrenodoxin] + O2 + 2 H(+) = (25R)-4beta,26-dihydroxycholesterol + 2 oxidized [adrenodoxin] + H2O. The enzyme catalyses (25R)-3beta-hydroxy-5-cholesten-26-al + 2 reduced [adrenodoxin] + O2 + H(+) = (25R)-3beta-hydroxy-5-cholestenoate + 2 oxidized [adrenodoxin] + H2O. The catalysed reaction is (25R)-cholest-5-ene-3beta,26-diol + 2 reduced [adrenodoxin] + O2 + 2 H(+) = (25R)-3beta-hydroxy-5-cholesten-26-al + 2 oxidized [adrenodoxin] + 2 H2O. It catalyses the reaction (25R)-3alpha,7alpha,12alpha-trihydroxy-5beta-cholestan-26-al + 2 reduced [adrenodoxin] + O2 + H(+) = (25R)-3alpha,7alpha,12alpha-trihydroxy-5beta-cholestan-26-oate + 2 oxidized [adrenodoxin] + H2O. It carries out the reaction 5beta-cholestane-3alpha,7alpha,12alpha-triol + 2 reduced [adrenodoxin] + O2 + 2 H(+) = (25R)-5beta-cholestane-3alpha,7alpha,12alpha,26-tetrol + 2 oxidized [adrenodoxin] + H2O. It functions in the pathway hormone biosynthesis; cholecalciferol biosynthesis. It participates in steroid metabolism; cholesterol degradation. The protein operates within lipid metabolism; bile acid biosynthesis. In terms of biological role, cytochrome P450 monooxygenase that catalyzes regio- and stereospecific hydroxylation of cholesterol and its derivatives. Hydroxylates (with R stereochemistry) the terminal methyl group of cholesterol side-chain in a three step reaction to yield at first a C26 alcohol, then a C26 aldehyde and finally a C26 acid. Regulates cholesterol homeostasis by catalyzing the conversion of excess cholesterol to bile acids via both the 'neutral' (classic) and the 'acid' (alternative) pathways. May also regulate cholesterol homeostasis via generation of active oxysterols, which act as ligands for NR1H2 and NR1H3 nuclear receptors, modulating the transcription of genes involved in lipid metabolism. Plays a role in cholestanol metabolism in the cerebellum. Similarly to cholesterol, hydroxylates cholestanol and may facilitate sterol diffusion through the blood-brain barrier to the systemic circulation for further degradation. Also hydroxylates retinal 7-ketocholesterol, a noxious oxysterol with pro-inflammatory and pro-apoptotic effects, and may play a role in its elimination from the retinal pigment epithelium. May play a redundant role in vitamin D biosynthesis. Catalyzes 25-hydroxylation of vitamin D3 that is required for its conversion to a functionally active form. The sequence is that of Sterol 26-hydroxylase, mitochondrial from Mus musculus (Mouse).